Consider the following 498-residue polypeptide: MAAAAGPGAALSPRPCDSDPATPGAQSPKDDNEDNSNDGTQPSKRRRMGSGDSSRSCETSSQDLGFSYYPAENLIEYKWPPDETGEYYMLQEQVSEYLGVTSFKRKYPDLERRDLSHKEKLYLRELNVITETQCTLGLTALRSDEVIDLMIKEYPAKHAEYSVILQEKERQRITDHYKEYSQMQQQNTQKVEASKVPEYIKKAAKKAAEFNSNLNRERMEERRAYFDLQTHVIQVPQGKYKVLPTERTKVSSYPVALIPGQFQEYYKRYSPDELRYLPLNTALYEPPLDPELPALDSDGDSDDGEDGRGDEKRKNKGTSDSSSGNVSEGESPPDSQEDSFQGRQKSKDKAATPRKDGPKRSVLSKSVPGYKPKVIPNAICGICLKGKESNKKGKAESLIHCSQCENSGHPSCLDMTMELVSMIKTYPWQCMECKTCIICGQPHHEEEMMFCDMCDRGYHTFCVGLGAIPSGRWICDCCQRAPPTPRKVGRRGKNSKEG.

The span at 1-10 shows a compositional bias: low complexity; it reads MAAAAGPGAA. Residues 1 to 62 are disordered; the sequence is MAAAAGPGAA…SSRSCETSSQ (62 aa). At A2 the chain carries N-acetylalanine. Residues S12, S36, and S50 each carry the phosphoserine modification. The interval 89–185 is essential to induce neural progenitor proliferation; the sequence is MLQEQVSEYL…HYKEYSQMQQ (97 aa). Residues 89-295 form an SAY region; sequence MLQEQVSEYL…PPLDPELPAL (207 aa). Residue K241 forms a Glycyl lysine isopeptide (Lys-Gly) (interchain with G-Cter in SUMO2) linkage. S270 carries the phosphoserine modification. The segment covering 285-296 has biased composition (low complexity); it reads EPPLDPELPALD. The interval 285-368 is disordered; sequence EPPLDPELPA…KRSVLSKSVP (84 aa). Residues 292-334 are essential to induce neural progenitor proliferation; the sequence is LPALDSDGDSDDGEDGRGDEKRKNKGTSDSSSGNVSEGESPPD. A phosphoserine mark is found at S297, S301, S327, and S331. Over residues 318–328 the composition is skewed to polar residues; sequence TSDSSSGNVSE. A compositionally biased stretch (basic and acidic residues) spans 345–359; that stretch reads KSKDKAATPRKDGPK. Residues 379–436 form a PHD-type 1; degenerate zinc finger; that stretch reads ICGICLKGKESNKKGKAESLIHCSQCENSGHPSCLDMTMELVSMIKTYPWQCMECKTC. Residue K385 forms a Glycyl lysine isopeptide (Lys-Gly) (interchain with G-Cter in SUMO2) linkage. Residues 438–481 form a PHD-type 2; degenerate zinc finger; that stretch reads ICGQPHHEEEMMFCDMCDRGYHTFCVGLGAIPSGRWICDCCQRA.

This sequence belongs to the SAYP family. In terms of assembly, component of neural progenitors-specific chromatin remodeling complex (npBAF complex) composed of at least, ARID1A/BAF250A or ARID1B/BAF250B, SMARCD1/BAF60A, SMARCD3/BAF60C, SMARCA2/BRM/BAF190B, SMARCA4/BRG1/BAF190A, SMARCB1/BAF47, SMARCC1/BAF155, SMARCE1/BAF57, SMARCC2/BAF170, PHF10/BAF45A, ACTL6A/BAF53A and actin. Interacts with ACTL6A/BAF53A, SMARCA2/BRM/BAF190B, SMARCA4/BRG1/BAF190A and PBRM1/BAF180.

The protein localises to the nucleus. Its function is as follows. Involved in transcription activity regulation by chromatin remodeling. Belongs to the neural progenitors-specific chromatin remodeling complex (npBAF complex) and is required for the proliferation of neural progenitors. During neural development a switch from a stem/progenitor to a post-mitotic chromatin remodeling mechanism occurs as neurons exit the cell cycle and become committed to their adult state. The transition from proliferating neural stem/progenitor cells to post-mitotic neurons requires a switch in subunit composition of the npBAF and nBAF complexes. As neural progenitors exit mitosis and differentiate into neurons, npBAF complexes which contain ACTL6A/BAF53A and PHF10/BAF45A, are exchanged for homologous alternative ACTL6B/BAF53B and DPF1/BAF45B or DPF3/BAF45C subunits in neuron-specific complexes (nBAF). The npBAF complex is essential for the self-renewal/proliferative capacity of the multipotent neural stem cells. The nBAF complex along with CREST plays a role regulating the activity of genes essential for dendrite growth. The chain is PHD finger protein 10 (PHF10) from Homo sapiens (Human).